The chain runs to 236 residues: Phycobilisome rod-core linker polypeptide cpcG (236 aa).

The PBS-linker domain occupies 11-193; the sequence is STQNQRVNGF…LDYNFLYKKN (183 aa).

It belongs to the phycobilisome linker protein family. In terms of assembly, the phycobilisome is a hemidiscoidal structure that is composed of two distinct substructures: a core complex and a number of rods radiating from the core.

The protein localises to the plastid. Its subcellular location is the chloroplast. It localises to the chloroplast thylakoid membrane. Functionally, rod-core linker protein required for attachment of phycocyanin to allophycocyanin in cores of phycobilisomes. Linker polypeptides determine the state of aggregation and the location of the disk-shaped phycobiliprotein units within the phycobilisome and modulate their spectroscopic properties in order to mediate a directed and optimal energy transfer. The polypeptide is Phycobilisome rod-core linker polypeptide cpcG (cpcG) (Aglaothamnion neglectum (Red alga)).